Consider the following 1146-residue polypeptide: Sodium/hydrogen exchanger 7 (1146 aa).

Over 1 to 28 (MTTVIDATMAYRFLEEATDSSSSSSSSK) the chain is Extracellular. Residues 29-49 (LESSPVDAVLFVGMSLVLGIA) traverse the membrane as a helical segment. At 50 to 58 (SRHLLRGTR) the chain is on the cytoplasmic side. The helical transmembrane segment at 59 to 79 (VPYTVALLVIGIALGSLEYGA) threads the bilayer. The Extracellular portion of the chain corresponds to 80–99 (KHNLGKIGHGIRIWNEIDPE). A helical transmembrane segment spans residues 100–120 (LLLAVFLPALLFESSFSMEVH). Over 121–127 (QIKRCLG) the chain is Cytoplasmic. The helical transmembrane segment at 128–148 (QMVLLAVPGVLISTACLGSLV) threads the bilayer. Residues 149–159 (KVTFPYEWDWK) are Extracellular-facing. Residues 160–180 (TSLLLGGLLSATDPVAVVALL) form a helical membrane-spanning segment. Residues 181–191 (KELGASKKLST) are Cytoplasmic-facing. The chain crosses the membrane as a helical span at residues 192–212 (IIEGESLMNDGTAIVVFQLFL). Residues 213-227 (KMAMGQNSDWSSIIK) lie on the Extracellular side of the membrane. Residues 228–250 (FLLKVALGAVGIGLAFGIASVIW) form a helical membrane-spanning segment. At 251 to 253 (LKF) the chain is on the cytoplasmic side. The helical transmembrane segment at 254–273 (IFNDTVIEITLTIAVSYFAY) threads the bilayer. At 274–278 (YTAQE) the chain is on the extracellular side. The chain crosses the membrane as a helical span at residues 279-299 (WAGASGVLTVMTLGMFYAAFA). Residues 300–313 (RTAFKGDSQKSLHH) lie on the Cytoplasmic side of the membrane. A helical membrane pass occupies residues 314–334 (FWEMVAYIANTLIFILSGVVI). The Extracellular portion of the chain corresponds to 335–352 (AEGILDSDKIAYQGNSWR). The chain crosses the membrane as a helical span at residues 353–373 (FLFLLYVYIQLSRVVVVGVLY). Over 374-387 (PLLCRFGYGLDWKE) the chain is Cytoplasmic. The helical transmembrane segment at 388–408 (SIILVWSGLRGAVALALSLSV) threads the bilayer. The Extracellular segment spans residues 409 to 420 (KQSSGNSHISKE). The helical transmembrane segment at 421 to 441 (TGTLFLFFTGGIVFLTLIVNG) threads the bilayer. At 442–1146 (STTQFVLRLL…PSKIVFRNDL (705 aa)) the chain is on the cytoplasmic side. 2 disordered regions span residues 981–1001 (LHRRPSSLTPPRSSSSDQLQR) and 1102–1128 (CQLPLKGESSTRQNTMVESSDEEDEDE). Low complexity predominate over residues 986–996 (SSLTPPRSSSS). Positions 1109 to 1118 (ESSTRQNTMV) are enriched in polar residues.

This sequence belongs to the monovalent cation:proton antiporter 1 (CPA1) transporter (TC 2.A.36) family. As to quaternary structure, interacts with CIPK24/SOS2 and CBL4/SOS3. In terms of processing, phosphorylated by CIPK24/SOS2 in complex with CBL4/SOS3. As to expression, more expressed in roots than in shoots. Mostly localized in parenchyma cells at the xylem/symplast boundary in roots, hypocotyls, stems and leaves. Also present in root tips epidermal cells.

The protein resides in the cell membrane. The catalysed reaction is Na(+)(in) + H(+)(out) = Na(+)(out) + H(+)(in). It carries out the reaction K(+)(in) + H(+)(out) = K(+)(out) + H(+)(in). In terms of biological role, acts in electroneutral exchange of protons for cations such as Na(+) or Li(+) across plasma membrane. Involved in Na(+) and K(+) homeostasis. Required for cytoplasmic Na(+) and Li(+) detoxification by secreting them from the cytoplasm to the extracellular space. Regulates Na(+) content of the xylem sap. The protein is Sodium/hydrogen exchanger 7 (NHX7) of Arabidopsis thaliana (Mouse-ear cress).